The chain runs to 109 residues: Nucleoid-associated protein YbaB (109 aa).

It belongs to the YbaB/EbfC family. As to quaternary structure, homodimer.

It is found in the cytoplasm. The protein localises to the nucleoid. Its function is as follows. Binds to DNA and alters its conformation. May be involved in regulation of gene expression, nucleoid organization and DNA protection. The protein is Nucleoid-associated protein YbaB of Escherichia coli O8 (strain IAI1).